The sequence spans 98 residues: Exopolysaccharide production repressor protein (98 aa).

Helical transmembrane passes span 6-26 (VFLS…YLNG) and 35-55 (TLIC…FLVW). The interval 73–98 (AEAANDEKQPGKVSLRRLNRPHHLNS) is disordered. Positions 86–98 (SLRRLNRPHHLNS) are enriched in basic residues.

It localises to the cell membrane. The protein operates within glycan metabolism; exopolysaccharide biosynthesis. In terms of biological role, inhibition of exopolysaccharide synthesis (EPS) and nodulation ability (NOD). In Rhizobium meliloti (strain 1021) (Ensifer meliloti), this protein is Exopolysaccharide production repressor protein (exoX).